Here is a 171-residue protein sequence, read N- to C-terminus: Lipoprotein signal peptidase (171 aa).

The next 3 membrane-spanning stretches (helical) occupy residues 8 to 28 (SFLW…YIVV), 64 to 84 (WQQY…VYFL), and 99 to 119 (ALII…GFVV). Residues Asp-120 and Asp-138 contribute to the active site. Residues 133-153 (VFNIADIAICIGAGLLALDAF) traverse the membrane as a helical segment.

Belongs to the peptidase A8 family.

It is found in the cell inner membrane. It carries out the reaction Release of signal peptides from bacterial membrane prolipoproteins. Hydrolyzes -Xaa-Yaa-Zaa-|-(S,diacylglyceryl)Cys-, in which Xaa is hydrophobic (preferably Leu), and Yaa (Ala or Ser) and Zaa (Gly or Ala) have small, neutral side chains.. The protein operates within protein modification; lipoprotein biosynthesis (signal peptide cleavage). In terms of biological role, this protein specifically catalyzes the removal of signal peptides from prolipoproteins. The sequence is that of Lipoprotein signal peptidase from Haemophilus influenzae (strain PittGG).